Here is a 648-residue protein sequence, read N- to C-terminus: MAPLTPQLLLQRGRPKTDKLGKIQSLNLSGLQLLSEHLDPNLLGRLKKLRELDLSNNLLETLPANLGLSHLRILRCTNNQLGDVTALHQFPELEELNLEGNPFLTVSDNLKVSFLLPKLRKVNGKDTASTCSQVENLDRELMDRVTAHWQKFIATVSPEEETDKVRADFMRSAVRDVCYGPESLIEFTQWRVRMIAEELVASGGAQVQDAKVPVEHPQAAGASKFRAREVASKRPGKDPVTLPPSKRVRALPPAQAEGSPMGADGGQAALHLEPLHFLQCHSRNNSPKDLETQLWACAFEPAREEGHSRATSQTVATCGGEAVCVIDCQTGLVLHKYKVPGEEFFSVAWTALTVVTQAGHKKRWNMLAAAGLRGMVRLLHVRAGFCCSVIRAHKKAIATLCFSPSHETHLFTASYDKRIILWDIGVPNQDYKFQASQLLTLNCGSVPLRLCPVATCPDDFLLAGCEGGCYCWDVRLDQPQKQRVCEVNFIFSEDSKVSGQRVDGLAFVNEDVVASKGSGQGTIYLWSWSQTWAGRGRQSVLPVVILVRLQWSPTNLAYFSLSTCPGKNLVLCGDEEGSVWIYDVEHLLKEPPQATTLQPPTQILKWPQPTALGQPVTKTMINTVVANAAFTYLTALTDSNIVSIWRRC.

LRR repeat units follow at residues 22–43 (KIQSLNLSGLQLLSEHLDPNLL), 48–69 (KLRELDLSNNLLETLPANLGLS), 70–91 (HLRILRCTNNQLGDVTALHQFP), and 92–113 (ELEELNLEGNPFLTVSDNLKVS). Residues 214 to 262 (VEHPQAAGASKFRAREVASKRPGKDPVTLPPSKRVRALPPAQAEGSPMG) form a disordered region. The span at 226 to 237 (RAREVASKRPGK) shows a compositional bias: basic and acidic residues. Phosphoserine is present on Ser259. 5 WD repeats span residues 392-432 (AHKK…QDYK), 443-482 (CGSVPLRLCPVATCPDDFLLAGCEGGCYCWDVRLDQPQKQ), 497-536 (VSGQRVDGLAFVNEDVVASKGSGQGTIYLWSWSQTWAGRG), 541-592 (LPVV…KEPP), and 616-648 (VTKTMINTVVANAAFTYLTALTDSNIVSIWRRC).

This sequence belongs to the LRWD1 family. Integral component of the ORC complex. Directly interacts with CDT1, GMNN and ORC2. Interacts with ORC2 only when non-ubiquitinated; this interaction prevents LRWD1 ubiquitination and degradation. Some of these interactions are regulated in a cell-cycle dependent manner. Interaction with ORC1 occurs predominantly during G1. Association with phosphorylated ORC1 during mitosis is not efficient. Interaction with CDT1 occurs during G1 phase, as well as during mitosis with phosphorylated CDT1. Interaction with GMNN occurs from G1/S to mitosis. Interaction with ORC2 is observed throughout the cell cycle. The stoichiometry of the ORCA/ORC/CDT1/GMNN complex is 1:1:1:2. Interacts with CUL4A and DDB1; this interaction may lead to ubiquitination. In terms of processing, ubiquitinated; undergoes 'Lys-48'-linked polyubiquitination leading to proteasomal degradation. Ubiquitination occurs within the WD repeats at the end of the G1 phase. Ubiquitination may be catalyzed by the CUL4-DDB1 E3 ubiquitin-protein ligase complex and other E3 ligases. As to expression, testis-specific.

Its subcellular location is the nucleus. It localises to the chromosome. The protein localises to the centromere. It is found in the telomere. The protein resides in the cytoplasm. Its subcellular location is the cytoskeleton. It localises to the microtubule organizing center. The protein localises to the centrosome. It is found in the kinetochore. In terms of biological role, required for G1/S transition. Recruits and stabilizes the origin recognition complex (ORC) onto chromatin during G1 to establish pre-replication complex (preRC) and to heterochromatic sites in post-replicated cells. Binds a combination of DNA and histone methylation repressive marks on heterochromatin. Binds histone H3 and H4 trimethylation marks H3K9me3, H3K27me3 and H4K20me3 in a cooperative manner with DNA methylation. Required for silencing of major satellite repeats. May be important ORC2, ORC3 and ORC4 stability. This chain is Leucine-rich repeat and WD repeat-containing protein 1 (LRWD1), found in Mus musculus (Mouse).